A 197-amino-acid chain; its full sequence is Recombination protein RecR (197 aa).

The segment at cysteine 56–cysteine 71 adopts a C4-type zinc-finger fold. The 96-residue stretch at histidine 79 to threonine 174 folds into the Toprim domain.

This sequence belongs to the RecR family.

In terms of biological role, may play a role in DNA repair. It seems to be involved in an RecBC-independent recombinational process of DNA repair. It may act with RecF and RecO. This is Recombination protein RecR from Leptospira borgpetersenii serovar Hardjo-bovis (strain JB197).